The primary structure comprises 598 residues: Elongation factor 4 (598 aa).

Residues 2-184 enclose the tr-type G domain; the sequence is KNIRNFSIIA…EIVAKIPAPE (183 aa). GTP-binding positions include 14-19 and 131-134; these read DHGKST and NKID.

This sequence belongs to the TRAFAC class translation factor GTPase superfamily. Classic translation factor GTPase family. LepA subfamily.

It is found in the cell inner membrane. It catalyses the reaction GTP + H2O = GDP + phosphate + H(+). In terms of biological role, required for accurate and efficient protein synthesis under certain stress conditions. May act as a fidelity factor of the translation reaction, by catalyzing a one-codon backward translocation of tRNAs on improperly translocated ribosomes. Back-translocation proceeds from a post-translocation (POST) complex to a pre-translocation (PRE) complex, thus giving elongation factor G a second chance to translocate the tRNAs correctly. Binds to ribosomes in a GTP-dependent manner. This Haemophilus influenzae (strain 86-028NP) protein is Elongation factor 4.